Here is a 209-residue protein sequence, read N- to C-terminus: Holliday junction branch migration complex subunit RuvA (209 aa).

The segment at 1 to 64 (MIGKLKGLVD…EDSIKLYGFA (64 aa)) is domain I. A domain II region spans residues 65–143 (SETEREWFRL…ALGASLHTLA (79 aa)). The interval 144–154 (GAGSEGAGVEA) is flexible linker. The interval 155–209 (PASGAVSDAISVLVNLGFGRSQAAVAVAASSKALGSGAGAGDLAKRALQELAQSG) is domain III.

It belongs to the RuvA family. As to quaternary structure, homotetramer. Forms an RuvA(8)-RuvB(12)-Holliday junction (HJ) complex. HJ DNA is sandwiched between 2 RuvA tetramers; dsDNA enters through RuvA and exits via RuvB. An RuvB hexamer assembles on each DNA strand where it exits the tetramer. Each RuvB hexamer is contacted by two RuvA subunits (via domain III) on 2 adjacent RuvB subunits; this complex drives branch migration. In the full resolvosome a probable DNA-RuvA(4)-RuvB(12)-RuvC(2) complex forms which resolves the HJ.

The protein resides in the cytoplasm. The RuvA-RuvB-RuvC complex processes Holliday junction (HJ) DNA during genetic recombination and DNA repair, while the RuvA-RuvB complex plays an important role in the rescue of blocked DNA replication forks via replication fork reversal (RFR). RuvA specifically binds to HJ cruciform DNA, conferring on it an open structure. The RuvB hexamer acts as an ATP-dependent pump, pulling dsDNA into and through the RuvAB complex. HJ branch migration allows RuvC to scan DNA until it finds its consensus sequence, where it cleaves and resolves the cruciform DNA. The sequence is that of Holliday junction branch migration complex subunit RuvA from Methylocella silvestris (strain DSM 15510 / CIP 108128 / LMG 27833 / NCIMB 13906 / BL2).